A 211-amino-acid chain; its full sequence is tRNA (guanine-N(7)-)-methyltransferase (211 aa).

S-adenosyl-L-methionine is bound by residues E43, E68, D95, and D117. D117 is an active-site residue. Residues K121, D153, and 190 to 193 (TEYE) contribute to the substrate site.

It belongs to the class I-like SAM-binding methyltransferase superfamily. TrmB family.

The enzyme catalyses guanosine(46) in tRNA + S-adenosyl-L-methionine = N(7)-methylguanosine(46) in tRNA + S-adenosyl-L-homocysteine. It participates in tRNA modification; N(7)-methylguanine-tRNA biosynthesis. Functionally, catalyzes the formation of N(7)-methylguanine at position 46 (m7G46) in tRNA. This chain is tRNA (guanine-N(7)-)-methyltransferase, found in Staphylococcus saprophyticus subsp. saprophyticus (strain ATCC 15305 / DSM 20229 / NCIMB 8711 / NCTC 7292 / S-41).